We begin with the raw amino-acid sequence, 80 residues long: MSDFPSKQFYNWFKENFGYTRLQRLDKCIDTYGSLENCVKEIMTVAFDDIENEHDSVDELFWGLIKKVMSNKAISSPDNR.

This is an uncharacterized protein from Acidianus filamentous virus 1 (isolate United States/Yellowstone) (AFV-1).